We begin with the raw amino-acid sequence, 316 residues long: Transaldolase (316 aa).

The active-site Schiff-base intermediate with substrate is K125.

This sequence belongs to the transaldolase family. Type 1 subfamily. As to quaternary structure, homodimer.

The protein localises to the cytoplasm. The enzyme catalyses D-sedoheptulose 7-phosphate + D-glyceraldehyde 3-phosphate = D-erythrose 4-phosphate + beta-D-fructose 6-phosphate. Its pathway is carbohydrate degradation; pentose phosphate pathway; D-glyceraldehyde 3-phosphate and beta-D-fructose 6-phosphate from D-ribose 5-phosphate and D-xylulose 5-phosphate (non-oxidative stage): step 2/3. In terms of biological role, transaldolase is important for the balance of metabolites in the pentose-phosphate pathway. The chain is Transaldolase from Verminephrobacter eiseniae (strain EF01-2).